The following is a 572-amino-acid chain: Urease subunit alpha (572 aa).

The region spanning 136-572 is the Urease domain; it reads GGIDTHIHFI…VPLGQRYFLF (437 aa). Ni(2+)-binding residues include His141, His143, and Lys224. Lys224 is modified (N6-carboxylysine). Substrate is bound at residue His226. Ni(2+) is bound by residues His253 and His279. His327 serves as the catalytic Proton donor. Asp367 lines the Ni(2+) pocket.

This sequence belongs to the metallo-dependent hydrolases superfamily. Urease alpha subunit family. Heterotrimer of UreA (gamma), UreB (beta) and UreC (alpha) subunits. Three heterotrimers associate to form the active enzyme. Ni cation serves as cofactor. Post-translationally, carboxylation allows a single lysine to coordinate two nickel ions.

The protein localises to the cytoplasm. It carries out the reaction urea + 2 H2O + H(+) = hydrogencarbonate + 2 NH4(+). The protein operates within nitrogen metabolism; urea degradation; CO(2) and NH(3) from urea (urease route): step 1/1. In Haemophilus influenzae (strain ATCC 51907 / DSM 11121 / KW20 / Rd), this protein is Urease subunit alpha.